The sequence spans 388 residues: Flavin-dependent monooxygenase (388 aa).

Residues 26-27 (PV) and 45-48 (YERD) contribute to the FAD site. Arg54 contacts NADPH. The FAD site is built by Asp61, Arg117, and Leu139. The substrate site is built by Gln192 and Arg213. Residues Asp311 and 321-324 (GQGV) contribute to the FAD site.

Belongs to the aromatic-ring hydroxylase family. TetX subfamily. As to quaternary structure, monomer. The cofactor is FAD.

It localises to the cytoplasm. The enzyme catalyses a tetracycline + NADPH + O2 + H(+) = an 11a-hydroxytetracycline + NADP(+) + H2O. The catalysed reaction is tetracycline + NADPH + O2 + H(+) = 11a-hydroxytetracycline + NADP(+) + H2O. It catalyses the reaction tigecycline + NADPH + O2 + H(+) = 11a-hydroxytigecycline + NADP(+) + H2O. It carries out the reaction oxytetracycline + NADPH + O2 + H(+) = 11a-hydroxy-oxytetracycline + NADP(+) + H2O. With respect to regulation, anhydrotetracycline, a poor substrate, prevents tetracycline degradation in vitro. In terms of biological role, an FAD-requiring monooxygenase active on tetracycline antibiotic derivatives, which leads to their inactivation. Hydroxylates carbon 11a of oxytetracycline and tigecycline. Acts on many tetracycline analogs (chlorotetracycline, demeclocycline, doxycycline, minocycline, oxytetracyclinee), probably by monooxygenization. Tigecycline, a new generation tetracycline antibiotic, is rendered less effective against E.coli by this monooxygenation, is much weaker at inhibiting translation in vitro and binds Mg(2+) considerably less well. Expression in E.coli BW25113 reduces its growth rate about 5%. The reaction probably proceeds by FAD reduction by NADPH and, second, hydroxylation of antibiotic in a ping-pong mechanism. Degrades chlortetracycline, probably by monooxygenation. Slowly oxidizes anhydrotetracycline, the final substrate in tetracycline biosynthesis. The polypeptide is Flavin-dependent monooxygenase (Bacteroides thetaiotaomicron).